The primary structure comprises 227 residues: Cytochrome c oxidase subunit 2 (227 aa).

Residues 1-26 (MATWSNFNLQNSASPLMEQIIFFHDH) are Mitochondrial intermembrane-facing. The chain crosses the membrane as a helical span at residues 27-51 (TLVILIMITILVGYLMISLFFNSYI). The Mitochondrial matrix segment spans residues 52 to 62 (NRFLLEGQMIE). The helical transmembrane segment at 63 to 81 (LIWTILPAITLIFIALPSL) threads the bilayer. Residues 82–227 (RLLYLLDELN…NFINWINNYS (146 aa)) are Mitochondrial intermembrane-facing. Cu cation contacts are provided by His-161, Cys-196, Glu-198, Cys-200, His-204, and Met-207. Glu-198 serves as a coordination point for Mg(2+).

This sequence belongs to the cytochrome c oxidase subunit 2 family. Component of the cytochrome c oxidase (complex IV, CIV), a multisubunit enzyme composed of a catalytic core of 3 subunits and several supernumerary subunits. The complex exists as a monomer or a dimer and forms supercomplexes (SCs) in the inner mitochondrial membrane with ubiquinol-cytochrome c oxidoreductase (cytochrome b-c1 complex, complex III, CIII). Requires Cu cation as cofactor.

It is found in the mitochondrion inner membrane. The catalysed reaction is 4 Fe(II)-[cytochrome c] + O2 + 8 H(+)(in) = 4 Fe(III)-[cytochrome c] + 2 H2O + 4 H(+)(out). Its function is as follows. Component of the cytochrome c oxidase, the last enzyme in the mitochondrial electron transport chain which drives oxidative phosphorylation. The respiratory chain contains 3 multisubunit complexes succinate dehydrogenase (complex II, CII), ubiquinol-cytochrome c oxidoreductase (cytochrome b-c1 complex, complex III, CIII) and cytochrome c oxidase (complex IV, CIV), that cooperate to transfer electrons derived from NADH and succinate to molecular oxygen, creating an electrochemical gradient over the inner membrane that drives transmembrane transport and the ATP synthase. Cytochrome c oxidase is the component of the respiratory chain that catalyzes the reduction of oxygen to water. Electrons originating from reduced cytochrome c in the intermembrane space (IMS) are transferred via the dinuclear copper A center (CU(A)) of subunit 2 and heme A of subunit 1 to the active site in subunit 1, a binuclear center (BNC) formed by heme A3 and copper B (CU(B)). The BNC reduces molecular oxygen to 2 water molecules using 4 electrons from cytochrome c in the IMS and 4 protons from the mitochondrial matrix. This is Cytochrome c oxidase subunit 2 (COII) from Choristoneura rosaceana (Oblique banded leafroller).